Reading from the N-terminus, the 310-residue chain is 4-hydroxyproline 2-epimerase (310 aa).

Cysteine 88 (proton acceptor) is an active-site residue. Substrate is bound by residues 89–90 (GH), histidine 208, and aspartate 232. Catalysis depends on cysteine 236, which acts as the Proton donor. Substrate is bound at residue 237–238 (GT).

This sequence belongs to the proline racemase family.

The catalysed reaction is trans-4-hydroxy-L-proline = cis-4-hydroxy-D-proline. Catalyzes the epimerization of trans-4-hydroxy-L-proline (t4LHyp) to cis-4-hydroxy-D-proline (c4DHyp). Is likely involved in a degradation pathway that converts t4LHyp to alpha-ketoglutarate. Displays no proline racemase activity. This chain is 4-hydroxyproline 2-epimerase, found in Acinetobacter baumannii (strain AYE).